The primary structure comprises 433 residues: UDP-N-acetylglucosamine 1-carboxyvinyltransferase (433 aa).

Position 22–23 (22–23) interacts with phosphoenolpyruvate; it reads KN. Arginine 96 serves as a coordination point for UDP-N-acetyl-alpha-D-glucosamine. Cysteine 120 acts as the Proton donor in catalysis. Cysteine 120 carries the post-translational modification 2-(S-cysteinyl)pyruvic acid O-phosphothioketal. Residues 125–129, aspartate 308, and isoleucine 330 contribute to the UDP-N-acetyl-alpha-D-glucosamine site; that span reads RPIDL.

The protein belongs to the EPSP synthase family. MurA subfamily.

Its subcellular location is the cytoplasm. It catalyses the reaction phosphoenolpyruvate + UDP-N-acetyl-alpha-D-glucosamine = UDP-N-acetyl-3-O-(1-carboxyvinyl)-alpha-D-glucosamine + phosphate. Its pathway is cell wall biogenesis; peptidoglycan biosynthesis. Its function is as follows. Cell wall formation. Adds enolpyruvyl to UDP-N-acetylglucosamine. The protein is UDP-N-acetylglucosamine 1-carboxyvinyltransferase of Koribacter versatilis (strain Ellin345).